The chain runs to 212 residues: Pyridoxine/pyridoxamine 5'-phosphate oxidase (212 aa).

Residues 8 to 11 (RREY) and K66 contribute to the substrate site. Residues 61–66 (RIVLLK), 76–77 (FT), R82, K83, and Q105 each bind FMN. Substrate is bound by residues Y123, R127, and S131. Residues 140-141 (QS) and W185 each bind FMN. A substrate-binding site is contributed by 191-193 (RLH). FMN is bound at residue R195.

This sequence belongs to the pyridoxamine 5'-phosphate oxidase family. In terms of assembly, homodimer. FMN is required as a cofactor.

The enzyme catalyses pyridoxamine 5'-phosphate + O2 + H2O = pyridoxal 5'-phosphate + H2O2 + NH4(+). It catalyses the reaction pyridoxine 5'-phosphate + O2 = pyridoxal 5'-phosphate + H2O2. It participates in cofactor metabolism; pyridoxal 5'-phosphate salvage; pyridoxal 5'-phosphate from pyridoxamine 5'-phosphate: step 1/1. The protein operates within cofactor metabolism; pyridoxal 5'-phosphate salvage; pyridoxal 5'-phosphate from pyridoxine 5'-phosphate: step 1/1. Its function is as follows. Catalyzes the oxidation of either pyridoxine 5'-phosphate (PNP) or pyridoxamine 5'-phosphate (PMP) into pyridoxal 5'-phosphate (PLP). The polypeptide is Pyridoxine/pyridoxamine 5'-phosphate oxidase (Shewanella baltica (strain OS155 / ATCC BAA-1091)).